A 156-amino-acid chain; its full sequence is Endoribonuclease YbeY (156 aa).

Residues histidine 117, histidine 121, and histidine 127 each coordinate Zn(2+).

This sequence belongs to the endoribonuclease YbeY family. Zn(2+) serves as cofactor.

The protein resides in the cytoplasm. Its function is as follows. Single strand-specific metallo-endoribonuclease involved in late-stage 70S ribosome quality control and in maturation of the 3' terminus of the 16S rRNA. The polypeptide is Endoribonuclease YbeY (Herminiimonas arsenicoxydans).